Consider the following 422-residue polypeptide: Enolase (422 aa).

Gln-162 contacts (2R)-2-phosphoglycerate. Residue Glu-204 is the Proton donor of the active site. Residues Asp-241, Glu-284, and Asp-311 each contribute to the Mg(2+) site. (2R)-2-phosphoglycerate is bound by residues Lys-336, Arg-365, Ser-366, and Lys-387. Lys-336 acts as the Proton acceptor in catalysis.

This sequence belongs to the enolase family. The cofactor is Mg(2+).

It localises to the cytoplasm. The protein resides in the secreted. It is found in the cell surface. It catalyses the reaction (2R)-2-phosphoglycerate = phosphoenolpyruvate + H2O. Its pathway is carbohydrate degradation; glycolysis; pyruvate from D-glyceraldehyde 3-phosphate: step 4/5. Catalyzes the reversible conversion of 2-phosphoglycerate (2-PG) into phosphoenolpyruvate (PEP). It is essential for the degradation of carbohydrates via glycolysis. The polypeptide is Enolase (Thermus thermophilus (strain ATCC 27634 / DSM 579 / HB8)).